A 185-amino-acid polypeptide reads, in one-letter code: Monooxygenase hypC (185 aa).

The next 3 membrane-spanning stretches (helical) occupy residues 35–55 (TGTF…PVIL), 75–95 (GHIQ…YAAY), and 106–126 (PFAV…VFMA). Asn129 is a glycosylation site (N-linked (GlcNAc...) asparagine). Residues 165–185 (ALFPLSGAVLGLLSTCKIVSF) traverse the membrane as a helical segment.

The protein belongs to the anthrone oxygenase family.

It is found in the membrane. Its pathway is mycotoxin biosynthesis. Its function is as follows. Monooxygenase; part of the fragmented gene cluster that mediates the biosynthesis of dothistromin (DOTH), a polyketide toxin very similar in structure to the aflatoxin precursor, versicolorin B. The first step of the pathway is the conversion of acetate to norsolorinic acid (NOR) and requires the fatty acid synthase subunits hexA and hexB, as well as the polyketide synthase pksA. PksA combines a hexanoyl starter unit and 7 malonyl-CoA extender units to synthesize the precursor NOR. The hexanoyl starter unit is provided to the acyl-carrier protein (ACP) domain by the fungal fatty acid synthase hexA/hexB. The second step is the conversion of NOR to averantin (AVN) and requires the norsolorinic acid ketoreductase nor1, which catalyzes the dehydration of norsolorinic acid to form (1'S)-averantin. The cytochrome P450 monooxygenase avnA then catalyzes the hydroxylation of AVN to 5'hydroxyaverantin (HAVN). The next step is performed by adhA that transforms HAVN to averufin (AVF). Averufin might then be converted to hydroxyversicolorone by cypX and avfA. Hydroxyversicolorone is further converted versiconal hemiacetal acetate (VHA) by moxY. VHA is then the substrate for the versiconal hemiacetal acetate esterase est1 to yield versiconal (VAL). Versicolorin B synthase vbsA then converts VAL to versicolorin B (VERB) by closing the bisfuran ring. Then, the activity of the versicolorin B desaturase verB leads to versicolorin A (VERA). DotB, a predicted chloroperoxidase, may perform epoxidation of the A-ring of VERA. Alternatively, a cytochrome P450, such as cypX or avnA could catalyze this step. It is also possible that another, uncharacterized, cytochrome P450 enzyme is responsible for this step. Opening of the epoxide could potentially be achieved by the epoxide hydrolase epoA. However, epoA seems not to be required for DOTH biosynthesis, but other epoxide hydrolases may have the ability to complement this hydrolysis. Alternatively, opening of the epoxide ring could be achieved non-enzymatically. The next step is the deoxygenation of ring A to yield the 5,8-dihydroxyanthraquinone which is most likely catalyzed by the NADPH dehydrogenase encoded by ver1. The last stages of DOTH biosynthesis are proposed to involve hydroxylation of the bisfuran. OrdB and norB might have oxidative roles here. An alternative possibility is that cytochrome P450 monoogenases such as avnA and cypX might perform these steps in addition to previously proposed steps. In Dothistroma septosporum (strain NZE10 / CBS 128990) (Red band needle blight fungus), this protein is Monooxygenase hypC.